Reading from the N-terminus, the 170-residue chain is Negative modulator of initiation of replication (170 aa).

Residues 139-145 are interaction with DNA; it reads NTNTGRK.

It belongs to the SeqA family. As to quaternary structure, homodimer. Polymerizes to form helical filaments.

It is found in the cytoplasm. Negative regulator of replication initiation, which contributes to regulation of DNA replication and ensures that replication initiation occurs exactly once per chromosome per cell cycle. Binds to pairs of hemimethylated GATC sequences in the oriC region, thus preventing assembly of replication proteins and re-initiation at newly replicated origins. Repression is relieved when the region becomes fully methylated. The polypeptide is Negative modulator of initiation of replication (Tolumonas auensis (strain DSM 9187 / NBRC 110442 / TA 4)).